Consider the following 85-residue polypeptide: MEDTLKITAEDLKNYIERIEKLEQEKRDVQDHIRDVYAKAADEGWDIKVMKQIIRLRKMDDDDREEQEILLDTYKRALGMNYEGE.

The protein belongs to the UPF0335 family.

This chain is UPF0335 protein WP0746, found in Wolbachia pipientis subsp. Culex pipiens (strain wPip).